A 166-amino-acid chain; its full sequence is Disulfide bond formation protein B (166 aa).

The Cytoplasmic portion of the chain corresponds to 1 to 12; the sequence is MKITKLPSYRQT. Residues 13-29 traverse the membrane as a helical segment; the sequence is ALIIFAGCVGLILAALY. The Periplasmic segment spans residues 30–47; sequence MQEVLGLHPCPLCITQRI. An intrachain disulfide couples Cys-39 to Cys-42. A helical transmembrane segment spans residues 48-64; sequence FIIGVGLISLIAAIHNP. Topologically, residues 65-70 are cytoplasmic; the sequence is AALGRK. Residues 71-88 form a helical membrane-spanning segment; it reads VYGCLATLSGVIGAGVSA. Topologically, residues 89 to 145 are periplasmic; sequence RHVWLQNLPEDQVPACGPDLAYMFDAFPLLDALKLLFAGDGNCADVVASFLGLSIPG. A disulfide bond links Cys-104 and Cys-131. A helical membrane pass occupies residues 146–164; the sequence is WTFVAFVGLIAISVWQGLR. The Cytoplasmic segment spans residues 165 to 166; it reads KA.

The protein belongs to the DsbB family.

It localises to the cell inner membrane. Required for disulfide bond formation in some periplasmic proteins. Acts by oxidizing the DsbA protein. This chain is Disulfide bond formation protein B, found in Saccharophagus degradans (strain 2-40 / ATCC 43961 / DSM 17024).